A 148-amino-acid polypeptide reads, in one-letter code: Hut operon positive regulatory protein (148 aa).

Belongs to the HutP family. In terms of assembly, homohexamer.

Functionally, antiterminator that binds to cis-acting regulatory sequences on the mRNA in the presence of histidine, thereby suppressing transcription termination and activating the hut operon for histidine utilization. In Bacillus velezensis (strain DSM 23117 / BGSC 10A6 / LMG 26770 / FZB42) (Bacillus amyloliquefaciens subsp. plantarum), this protein is Hut operon positive regulatory protein.